The following is a 110-amino-acid chain: Large ribosomal subunit protein uL22 (110 aa).

This sequence belongs to the universal ribosomal protein uL22 family. In terms of assembly, part of the 50S ribosomal subunit.

In terms of biological role, this protein binds specifically to 23S rRNA; its binding is stimulated by other ribosomal proteins, e.g. L4, L17, and L20. It is important during the early stages of 50S assembly. It makes multiple contacts with different domains of the 23S rRNA in the assembled 50S subunit and ribosome. Functionally, the globular domain of the protein is located near the polypeptide exit tunnel on the outside of the subunit, while an extended beta-hairpin is found that lines the wall of the exit tunnel in the center of the 70S ribosome. This is Large ribosomal subunit protein uL22 from Shigella flexneri serotype 5b (strain 8401).